The chain runs to 122 residues: Large ribosomal subunit protein uL14 (122 aa).

This sequence belongs to the universal ribosomal protein uL14 family. In terms of assembly, part of the 50S ribosomal subunit. Forms a cluster with proteins L3 and L19. In the 70S ribosome, L14 and L19 interact and together make contacts with the 16S rRNA in bridges B5 and B8.

Its function is as follows. Binds to 23S rRNA. Forms part of two intersubunit bridges in the 70S ribosome. The protein is Large ribosomal subunit protein uL14 of Teredinibacter turnerae (strain ATCC 39867 / T7901).